The sequence spans 254 residues: Small ribosomal subunit protein mS40 (254 aa).

The N-terminal 33 residues, 1 to 33 (MAAPLRHTLLKLVPTLLRSSYVAQVPLQTLCTR), are a transit peptide targeting the mitochondrion. Serine 47 carries the phosphoserine modification. The interval 218–254 (YQGNLLEESGPPPESMPEMPTTPPAESSIEQPGSQSA) is disordered. Over residues 227–240 (GPPPESMPEMPTTP) the composition is skewed to pro residues.

It belongs to the bacterial ribosomal protein bS18 family. Mitochondrion-specific ribosomal protein mS40 subfamily. Component of the mitochondrial ribosome small subunit (28S) which comprises a 12S rRNA and about 30 distinct proteins.

The protein resides in the mitochondrion. This is Small ribosomal subunit protein mS40 (Mrps18b) from Mus musculus (Mouse).